Here is a 231-residue protein sequence, read N- to C-terminus: 7-cyano-7-deazaguanine synthase (231 aa).

8–18 (FSGGQDSTTCL) is an ATP binding site. Positions 188, 197, 200, and 203 each coordinate Zn(2+).

The protein belongs to the QueC family. Zn(2+) serves as cofactor.

The catalysed reaction is 7-carboxy-7-deazaguanine + NH4(+) + ATP = 7-cyano-7-deazaguanine + ADP + phosphate + H2O + H(+). Its pathway is purine metabolism; 7-cyano-7-deazaguanine biosynthesis. Functionally, catalyzes the ATP-dependent conversion of 7-carboxy-7-deazaguanine (CDG) to 7-cyano-7-deazaguanine (preQ(0)). This chain is 7-cyano-7-deazaguanine synthase, found in Escherichia coli (strain ATCC 8739 / DSM 1576 / NBRC 3972 / NCIMB 8545 / WDCM 00012 / Crooks).